A 326-amino-acid chain; its full sequence is tRNA-modifying protein YgfZ (326 aa).

Folate is bound by residues tryptophan 27 and tryptophan 189.

The protein belongs to the tRNA-modifying YgfZ family.

It is found in the cytoplasm. Its function is as follows. Folate-binding protein involved in regulating the level of ATP-DnaA and in the modification of some tRNAs. It is probably a key factor in regulatory networks that act via tRNA modification, such as initiation of chromosomal replication. The sequence is that of tRNA-modifying protein YgfZ from Escherichia coli O17:K52:H18 (strain UMN026 / ExPEC).